The primary structure comprises 734 residues: Subtilisin-like protease (734 aa).

The N-terminal stretch at Met-1–Ala-20 is a signal peptide. Positions Thr-28–His-109 constitute an Inhibitor I9 domain. The region spanning Pro-114–Ser-591 is the Peptidase S8 domain. Asp-141 serves as the catalytic Charge relay system. An N-linked (GlcNAc...) asparagine glycan is attached at Asn-172. Residue His-199 is the Charge relay system of the active site. Asn-222 and Asn-306 each carry an N-linked (GlcNAc...) asparagine glycan. The 86-residue stretch at Pro-357 to Met-442 folds into the PA domain. Asn-448 and Asn-509 each carry an N-linked (GlcNAc...) asparagine glycan. Ser-524 functions as the Charge relay system in the catalytic mechanism. The N-linked (GlcNAc...) asparagine glycan is linked to Asn-652.

This sequence belongs to the peptidase S8 family.

It is found in the secreted. Its subcellular location is the extracellular space. It localises to the apoplast. In terms of biological role, required for arbuscular mycorrhiza (AM) development during AM symbiosis with AM fungi (e.g. Glomeromycota intraradices). This is Subtilisin-like protease from Petunia hybrida (Petunia).